The sequence spans 320 residues: AA9 family lytic polysaccharide monooxygenase-like protein CEL1 (320 aa).

The first 29 residues, 1 to 29 (MRLPSRQQVLKMLATFSLALGLFAAKVQA), serve as a signal peptide directing secretion. 2 disulfides stabilise this stretch: Cys-78–Cys-199 and Cys-121–Cys-126. His-109 lines the Cu(2+) pocket. A glycan (N-linked (GlcNAc...) asparagine) is linked at Asn-163. His-189 and Gln-194 together coordinate O2. Tyr-196 is a Cu(2+) binding site. The tract at residues 255–284 (GSGGNGGSPTTTPHTTTPITTSPPPTSTPG) is disordered. Positions 262–274 (SPTTTPHTTTPIT) are enriched in low complexity. Residues 284 to 320 (GTIPQYGQCGGIGWTGGTGCVAPYQCKVINDYYSQCL) enclose the CBM1 domain.

This sequence belongs to the polysaccharide monooxygenase AA9 family. Requires Cu(2+) as cofactor.

Its subcellular location is the secreted. It carries out the reaction [(1-&gt;4)-beta-D-glucosyl]n+m + reduced acceptor + O2 = 4-dehydro-beta-D-glucosyl-[(1-&gt;4)-beta-D-glucosyl]n-1 + [(1-&gt;4)-beta-D-glucosyl]m + acceptor + H2O.. In terms of biological role, lytic polysaccharide monooxygenase (LPMO)-like protein that binds strongly to cellulose. Seems not to acts as an endoglucanase, a ceUobiohydrolase able to hydrolyze fluorogenic cellobiosides, a /3-glucosidase, a xylanase, nor a cellobiose:quinone oxidoreductase. This chain is AA9 family lytic polysaccharide monooxygenase-like protein CEL1, found in Agaricus bisporus (White button mushroom).